A 392-amino-acid chain; its full sequence is uncharacterized protein (392 aa).

The 70-residue stretch at 7–76 (TEYYDLLGIS…RSQYDQFGKE (70 aa)) folds into the J domain. Ser108 bears the Phosphoserine mark.

This is an uncharacterized protein from Schizosaccharomyces pombe (strain 972 / ATCC 24843) (Fission yeast).